The following is a 202-amino-acid chain: FMN-dependent NADH:quinone oxidoreductase 2 (202 aa).

FMN contacts are provided by residues Ser9, 15-17 (SAS), 95-98 (MYNF), and 139-142 (TAGG).

The protein belongs to the azoreductase type 1 family. As to quaternary structure, homodimer. The cofactor is FMN.

It carries out the reaction 2 a quinone + NADH + H(+) = 2 a 1,4-benzosemiquinone + NAD(+). The catalysed reaction is N,N-dimethyl-1,4-phenylenediamine + anthranilate + 2 NAD(+) = 2-(4-dimethylaminophenyl)diazenylbenzoate + 2 NADH + 2 H(+). In terms of biological role, quinone reductase that provides resistance to thiol-specific stress caused by electrophilic quinones. Reduces both benzoquinones and naphthoquinones efficiently. Also exhibits azoreductase activity. Catalyzes the reductive cleavage of the azo bond in aromatic azo compounds to the corresponding amines. Preferred substrates are the large bis-azo dye Ponceau BS, amaranth and tropaeolin O. The sequence is that of FMN-dependent NADH:quinone oxidoreductase 2 from Pseudomonas aeruginosa (strain ATCC 15692 / DSM 22644 / CIP 104116 / JCM 14847 / LMG 12228 / 1C / PRS 101 / PAO1).